The chain runs to 86 residues: Small ribosomal subunit protein bS20 (86 aa).

A compositionally biased stretch (basic residues) spans 1–11 (MANIKQQKKRN). Residues 1–20 (MANIKQQKKRNKTNEKRRLQ) are disordered.

Belongs to the bacterial ribosomal protein bS20 family.

Binds directly to 16S ribosomal RNA. This is Small ribosomal subunit protein bS20 from Aster yellows witches'-broom phytoplasma (strain AYWB).